A 686-amino-acid chain; its full sequence is Solute carrier family 22 member 23 (686 aa).

Disordered regions lie at residues 1–62 (MAID…GGGP) and 169–193 (GNRS…DKGD). Residue Asn24 is glycosylated (N-linked (GlcNAc...) asparagine). Helical transmembrane passes span 234 to 254 (FSLL…ADWV) and 258 to 278 (PVLL…ALSV). Asn279 carries an N-linked (GlcNAc...) asparagine glycan. 8 helical membrane-spanning segments follow: residues 288–308 (FFEG…RIEL), 315–335 (FMIT…MPGL), 344–364 (VLQA…SIFP), 467–487 (ADYY…CVVV), 494–514 (GGLL…LGLL), 538–558 (IAFS…SVFF), 569–589 (CGGL…APII), and 598–618 (FLHH…ILLL).

The protein belongs to the major facilitator (TC 2.A.1) superfamily. Organic cation transporter (TC 2.A.1.19) family.

The protein resides in the membrane. The polypeptide is Solute carrier family 22 member 23 (SLC22A23) (Homo sapiens (Human)).